The following is a 357-amino-acid chain: G-protein coupled receptor 183 (357 aa).

Residues 1–27 (MANNFTTPLATSHGNNCDLYAHHSTAR) lie on the Extracellular side of the membrane. Residue Asn4 is glycosylated (N-linked (GlcNAc...) asparagine). Residues 28–53 (VLMPLHYSLVFIIGLVGNLLALVVIV) traverse the membrane as a helical segment. The Cytoplasmic segment spans residues 54-73 (QNRKKINSTTLYSMNLVISD). A helical transmembrane segment spans residues 74 to 91 (ILFTTALPTRIAYYALGF). Position 83 (Arg83) interacts with 7alpha,25-dihydroxycholesterol. Over 92–101 (DWRIGDALCR) the chain is Extracellular. A disulfide bridge connects residues Cys100 and Cys177. The chain crosses the membrane as a helical span at residues 102–123 (VTALVFYINTYAGVNFMTCLSI). 7alpha,25-dihydroxycholesterol contacts are provided by Tyr108 and Tyr112. An interaction with G proteins region spans residues 122–130 (SIDRFFAVV). Topologically, residues 124-145 (DRFFAVVHPLRYNKIKRIEYAK) are cytoplasmic. A helical membrane pass occupies residues 146-164 (GVCLSVWILVFAQTLPLLL). Topologically, residues 165 to 188 (TPMSKEEGDKTTCMEYPNFEGTAS) are extracellular. A helical transmembrane segment spans residues 189 to 211 (LPWILLGACLLGYVLPITVILLC). The Cytoplasmic segment spans residues 212–237 (YSQICCKLFRTAKQNPLTEKSGVNKK). The chain crosses the membrane as a helical span at residues 238-261 (ALNTIILIIVVFILCFTPYHVAII). Tyr256 is a 7alpha,25-dihydroxycholesterol binding site. Over 262–283 (QHMIKMLCSPGALECGARHSFQ) the chain is Extracellular. A helical membrane pass occupies residues 284–308 (ISLHFTVCLMNFNCCMDPFIYFFAC). Topologically, residues 309–357 (KGYKRKVMKMLKRQVSVSISSAVRSAPEENSREMTESQMMIHSKASNGR) are cytoplasmic. Phosphoserine is present on residues Ser324 and Ser345. Positions 336–357 (EENSREMTESQMMIHSKASNGR) are disordered. Residues 344 to 357 (ESQMMIHSKASNGR) show a composition bias toward polar residues.

The protein belongs to the G-protein coupled receptor 1 family. In terms of assembly, homodimer and heterodimer. Heterodimerizes with CXCR5; leading to modulate the interaction between of CXCL13 and CXCR5. As to expression, expressed in mature B-cells and increases in expression early after activation, before being down-regulated in germinal center B-cells. Expressed in astrocytes. Specifically expressed in CD4(+) dendritic cells but not in CD8(+) dendritic cells. Expressed in monocyte/osteoclasts precursors and mature osteoclasts.

It is found in the cell membrane. In terms of biological role, G-protein coupled receptor expressed in lymphocytes that acts as a chemotactic receptor for B-cells, T-cells, splenic dendritic cells, monocytes/macrophages and astrocytes. Receptor for oxysterol 7-alpha,25-dihydroxycholesterol (7-alpha,25-OHC) and other related oxysterols. Mediates cell positioning and movement of a number of cells by binding the 7-alpha,25-OHC ligand that forms a chemotactic gradient. Binding of 7-alpha,25-OHC mediates the correct localization of B-cells during humoral immune responses. Collaborates with CXCR5 to mediate B-cell migration; probably by forming a heterodimer with CXCR5 that affects the interaction between of CXCL13 and CXCR5. Guides B-cell movement along the B-cell zone-T-cell zone boundary and later to interfollicular and outer follicular regions. Its specific expression during B-cell maturation helps position B-cells appropriately for mounting T-dependent antibody responses. Also acts as a chemotactic receptor for some T-cells upon binding to 7-alpha,25-OHC ligand. Promotes follicular helper T (Tfh) cells differentiation by positioning activated T-cells at the follicle-T-zone interface, promoting contact of newly activated CD4 T-cells with activated dendritic cells and exposing them to Tfh-cell-promoting inducible costimulator (ICOS) ligand. Expression in splenic dendritic cells is required for their homeostasis, localization and ability to induce B- and T-cell responses: GPR183 acts as a chemotactic receptor in dendritic cells that mediates the accumulation of CD4(+) dendritic cells in bridging channels. Regulates migration of astrocytes and is involved in communication between astrocytes and macrophages. Promotes osteoclast precursor migration to bone surfaces. Signals constitutively through G(i)-alpha, but not G(s)-alpha or G(q)-alpha. Signals constitutively also via MAPK1/3 (ERK1/2). This chain is G-protein coupled receptor 183, found in Mus musculus (Mouse).